Here is an 86-residue protein sequence, read N- to C-terminus: Omega-theraphotoxin-Hhn1b (86 aa).

Residues 1 to 21 (MKSIVFVALFGLALLAVVCSA) form the signal peptide. A propeptide spanning residues 22–50 (SEDAHKELLKEVVRAMVVDKTDAVQAEER) is cleaved from the precursor. 3 disulfide bridges follow: Cys-52-Cys-66, Cys-59-Cys-71, and Cys-65-Cys-78.

It belongs to the neurotoxin 10 (Hwtx-1) family. 17 (Hntx-9) subfamily. As to expression, expressed by the venom gland.

It localises to the secreted. Functionally, ion channel inhibitor. This chain is Omega-theraphotoxin-Hhn1b, found in Cyriopagopus hainanus (Chinese bird spider).